Reading from the N-terminus, the 437-residue chain is Zinc finger CCCH domain-containing protein 40 (437 aa).

The C3H1-type zinc-finger motif lies at 6–33 (MYKTKLCILFNKTGDCSRPNCTFAHGNA). Residues 35–107 (LRRPGESSFT…MPFENRRDKD (73 aa)) are disordered. Basic and acidic residues predominate over residues 48 to 85 (HNMDSDLRDRRHNMDSDLRDRLGRQFSPERRPSLDRSG). Residues 145 to 244 (NNVLEEQLKD…LGNQLSTYLA (100 aa)) adopt a coiled-coil conformation. A Phosphoserine modification is found at Ser-259. Disordered stretches follow at residues 266–360 (RNLR…RRRF) and 380–437 (EFDD…DDSV). Residues 307–319 (RGEEEKVENEKKR) show a composition bias toward basic and acidic residues. 2 stretches are compositionally biased toward acidic residues: residues 333-343 (EEESGAWNDED) and 383-392 (DVAESEEENP). Positions 426–437 (MEQKKAYDDDSV) are enriched in basic and acidic residues.

The polypeptide is Zinc finger CCCH domain-containing protein 40 (Arabidopsis thaliana (Mouse-ear cress)).